The sequence spans 977 residues: Protein bric-a-brac 1 (977 aa).

Residues 1–97 (MASAQAETNV…RSSSVASPSS (97 aa)) are disordered. Polar residues predominate over residues 34–43 (PKSNRSSPTQ). Basic and acidic residues predominate over residues 44 to 69 (QEEKRIKSEDRTSPTGGAKDEDKESQ). Residues 80-97 (SPVSSPQGRSSSVASPSS) show a composition bias toward low complexity. A BTB domain is found at 127–192 (VDVTLACDGR…MYRGEINVSQ (66 aa)). Disordered stretches follow at residues 221-249 (AAAAAASSERMPSSPKESTSTSRTEHDRE), 281-348 (ERQQ…GSTV), 362-434 (DMPS…RFPL), and 447-497 (SGLG…ADDL). Positions 316–330 (ERMELEQKERERQRD) are enriched in basic and acidic residues. Residues 372-396 (PLSRSSRPHSQSPQQQQAQQQGQLP) show a composition bias toward low complexity. A compositionally biased stretch (gly residues) spans 469 to 491 (GGGVGGGGVGGGGAGGVGSGGGS). An HTH psq-type domain is found at 559-611 (FRERGPLKSWRPETMAEAIFSVLKEGLSLSQAARKYDIPYPTFVLYANRVHNM). Positions 569 to 614 (RPETMAEAIFSVLKEGLSLSQAARKYDIPYPTFVLYANRVHNMLGP) form a DNA-binding region, H-T-H motif. A DNA-binding region (a.T hook) is located at residues 621 to 632 (DLRPKGRGRPQR). 2 disordered regions span residues 772 to 900 (ASIS…LGDL) and 925 to 977 (VGAS…TTSE). Composition is skewed to low complexity over residues 804–816 (MAVALHHQQQQQA), 838–853 (QQQQQQQQQHHQGGHQ), 862–872 (ASSSSSASSSS), and 925–966 (VGAS…SSGG).

In terms of tissue distribution, leg imaginal disk at the central region of the tarsus and in eye antenna disk at the basal cylinder.

Its subcellular location is the nucleus. Its function is as follows. Probably acts as a transcriptional regulator. Required for the specification of the tarsal segment. Also involved in antenna development. The protein is Protein bric-a-brac 1 (bab1) of Drosophila melanogaster (Fruit fly).